The following is a 142-amino-acid chain: Putative pre-16S rRNA nuclease (142 aa).

Belongs to the YqgF nuclease family.

The protein resides in the cytoplasm. Its function is as follows. Could be a nuclease involved in processing of the 5'-end of pre-16S rRNA. The protein is Putative pre-16S rRNA nuclease of Staphylococcus saprophyticus subsp. saprophyticus (strain ATCC 15305 / DSM 20229 / NCIMB 8711 / NCTC 7292 / S-41).